A 364-amino-acid chain; its full sequence is Spermatogenesis-associated protein 22 (364 aa).

Composition is skewed to polar residues over residues 1–13, 30–48, 73–108, 137–169, and 177–189; these read MKRN…TRST, QPLT…NASD, KTVN…SKSD, LMTN…LPNQ, and QTKS…STMR. 2 disordered regions span residues 1 to 51 and 70 to 189; these read MKRN…DNYD and PLTK…STMR.

Component of a multiprotein complex with MEIOB and RPA2. Interacts with MEIOB. Interacts with the complex BRME1:HSF2BP:BRCA2.

It localises to the chromosome. Its function is as follows. Meiosis-specific protein required for homologous recombination in meiosis I. The sequence is that of Spermatogenesis-associated protein 22 (SPATA22) from Bos taurus (Bovine).